We begin with the raw amino-acid sequence, 143 residues long: 3-hydroxyacyl-[acyl-carrier-protein] dehydratase FabZ (143 aa).

The active site involves His49.

Belongs to the thioester dehydratase family. FabZ subfamily.

It localises to the cytoplasm. It carries out the reaction a (3R)-hydroxyacyl-[ACP] = a (2E)-enoyl-[ACP] + H2O. In terms of biological role, involved in unsaturated fatty acids biosynthesis. Catalyzes the dehydration of short chain beta-hydroxyacyl-ACPs and long chain saturated and unsaturated beta-hydroxyacyl-ACPs. This chain is 3-hydroxyacyl-[acyl-carrier-protein] dehydratase FabZ, found in Ehrlichia chaffeensis (strain ATCC CRL-10679 / Arkansas).